The following is a 290-amino-acid chain: 4-hydroxy-3-methylbut-2-enyl diphosphate reductase (290 aa).

Cysteine 12 is a binding site for [4Fe-4S] cluster. 2 residues coordinate (2E)-4-hydroxy-3-methylbut-2-enyl diphosphate: histidine 50 and histidine 83. The dimethylallyl diphosphate site is built by histidine 50 and histidine 83. Residues histidine 50 and histidine 83 each contribute to the isopentenyl diphosphate site. Cysteine 105 lines the [4Fe-4S] cluster pocket. Residue histidine 133 participates in (2E)-4-hydroxy-3-methylbut-2-enyl diphosphate binding. Histidine 133 contacts dimethylallyl diphosphate. Residue histidine 133 participates in isopentenyl diphosphate binding. Glutamate 135 serves as the catalytic Proton donor. Threonine 173 lines the (2E)-4-hydroxy-3-methylbut-2-enyl diphosphate pocket. Cysteine 202 provides a ligand contact to [4Fe-4S] cluster. Residues serine 230, asparagine 232, and serine 274 each contribute to the (2E)-4-hydroxy-3-methylbut-2-enyl diphosphate site. Dimethylallyl diphosphate-binding residues include serine 230, asparagine 232, and serine 274. Residues serine 230, asparagine 232, and serine 274 each contribute to the isopentenyl diphosphate site.

The protein belongs to the IspH family. [4Fe-4S] cluster is required as a cofactor.

The catalysed reaction is isopentenyl diphosphate + 2 oxidized [2Fe-2S]-[ferredoxin] + H2O = (2E)-4-hydroxy-3-methylbut-2-enyl diphosphate + 2 reduced [2Fe-2S]-[ferredoxin] + 2 H(+). It catalyses the reaction dimethylallyl diphosphate + 2 oxidized [2Fe-2S]-[ferredoxin] + H2O = (2E)-4-hydroxy-3-methylbut-2-enyl diphosphate + 2 reduced [2Fe-2S]-[ferredoxin] + 2 H(+). It functions in the pathway isoprenoid biosynthesis; dimethylallyl diphosphate biosynthesis; dimethylallyl diphosphate from (2E)-4-hydroxy-3-methylbutenyl diphosphate: step 1/1. It participates in isoprenoid biosynthesis; isopentenyl diphosphate biosynthesis via DXP pathway; isopentenyl diphosphate from 1-deoxy-D-xylulose 5-phosphate: step 6/6. Functionally, catalyzes the conversion of 1-hydroxy-2-methyl-2-(E)-butenyl 4-diphosphate (HMBPP) into a mixture of isopentenyl diphosphate (IPP) and dimethylallyl diphosphate (DMAPP). Acts in the terminal step of the DOXP/MEP pathway for isoprenoid precursor biosynthesis. In Nitratidesulfovibrio vulgaris (strain ATCC 29579 / DSM 644 / CCUG 34227 / NCIMB 8303 / VKM B-1760 / Hildenborough) (Desulfovibrio vulgaris), this protein is 4-hydroxy-3-methylbut-2-enyl diphosphate reductase.